Consider the following 66-residue polypeptide: Transmembrane protein B66L (66 aa).

Residues 1–20 (MDIKRALILFLLFLVVLSNA) form the signal peptide. The Extracellular segment spans residues 21-40 (FVDYIISNFNHAVTCRKPTY). A helical transmembrane segment spans residues 41–61 (FGIVLQGIFLVILFSIVDYLI). Over 62 to 66 (NENIL) the chain is Cytoplasmic.

This sequence belongs to the asfivirus B66L family.

Its subcellular location is the host membrane. The sequence is that of Transmembrane protein B66L from Ornithodoros (relapsing fever ticks).